The chain runs to 514 residues: Probable WRKY transcription factor 4 (514 aa).

3 disordered regions span residues 1–28, 175–204, and 278–394; these read MSEK…PPRP, QPQT…PLPA, and YKGQ…TVTE. 2 stretches are compositionally biased toward polar residues: residues 185–198 and 286–299; these read QVQS…QIPT and PPQN…DNTA. Residues 223–287 constitute a DNA-binding region (WRKY 1); it reads NVDKPADDGY…YKGQHNHEPP (65 aa). A compositionally biased stretch (low complexity) spans 300 to 313; that stretch reads NINGSSINNNRGSS. Positions 315 to 326 are enriched in polar residues; that stretch reads LGASQFQTNSSN. Over residues 359–380 the composition is skewed to basic and acidic residues; that stretch reads TDVREKDENEPDPKRRSTEVRI. The WRKY 2 DNA-binding region spans 403 to 468; that stretch reads SEVDLLDDGY…YEGKHNHDLP (66 aa). Zn(2+) contacts are provided by C434, T436, C439, H463, and H465. The segment at 464–514 is disordered; that stretch reads NHDLPAAKSSSHAAAAAQLRPDNRPGGLANLNQQQQQQPVARLRLKEEQTT. Low complexity predominate over residues 469-480; that stretch reads AAKSSSHAAAAA.

In terms of tissue distribution, in young, mature and senescent leaves.

It localises to the nucleus. In terms of biological role, transcription factor that binds specifically to the W box (5'-(T)TGAC[CT]-3'), a frequently occurring elicitor-responsive cis-acting element. Has a positive role in resistance to necrotrophic pathogens (e.g. Botrytis cinerea), but a negative effect on plant resistance to biotrophic pathogens (e.g. Pseudomonas syringae). In Arabidopsis thaliana (Mouse-ear cress), this protein is Probable WRKY transcription factor 4 (WRKY4).